The sequence spans 368 residues: tRNA-cytidine(32) 2-sulfurtransferase (368 aa).

The PP-loop motif signature appears at 95–100 (SGGKDS). [4Fe-4S] cluster contacts are provided by Cys170, Cys173, and Cys261.

It belongs to the TtcA family. In terms of assembly, homodimer. Mg(2+) serves as cofactor. It depends on [4Fe-4S] cluster as a cofactor.

It localises to the cytoplasm. The enzyme catalyses cytidine(32) in tRNA + S-sulfanyl-L-cysteinyl-[cysteine desulfurase] + AH2 + ATP = 2-thiocytidine(32) in tRNA + L-cysteinyl-[cysteine desulfurase] + A + AMP + diphosphate + H(+). It participates in tRNA modification. Catalyzes the ATP-dependent 2-thiolation of cytidine in position 32 of tRNA, to form 2-thiocytidine (s(2)C32). The sulfur atoms are provided by the cysteine/cysteine desulfurase (IscS) system. The chain is tRNA-cytidine(32) 2-sulfurtransferase from Psychrobacter sp. (strain PRwf-1).